A 275-amino-acid polypeptide reads, in one-letter code: Large ribosomal subunit protein uL2 (275 aa).

Residues 224-275 (AMNPVDHPHGGGEGKAPIGHPGPLTPWGKPALGYKTRKKGKASDKFIIRRRK) are disordered. Residues 264–275 (KASDKFIIRRRK) are compositionally biased toward basic and acidic residues.

Belongs to the universal ribosomal protein uL2 family. In terms of assembly, part of the 50S ribosomal subunit. Forms a bridge to the 30S subunit in the 70S ribosome.

Functionally, one of the primary rRNA binding proteins. Required for association of the 30S and 50S subunits to form the 70S ribosome, for tRNA binding and peptide bond formation. It has been suggested to have peptidyltransferase activity; this is somewhat controversial. Makes several contacts with the 16S rRNA in the 70S ribosome. The chain is Large ribosomal subunit protein uL2 from Thermoanaerobacter pseudethanolicus (strain ATCC 33223 / 39E) (Clostridium thermohydrosulfuricum).